The following is a 76-amino-acid chain: ISGPWSDFFRALGAVILYLMTSIVVLVERGNNSKGAAGVLGLCAAGLFGYDAYITFPSGTRRHTAAPTDPADGPVR.

One can recognise an MARVEL domain in the interval 1-60; sequence ISGPWSDFFRALGAVILYLMTSIVVLVERGNNSKGAAGVLGLCAAGLFGYDAYITFPSGT. The helical transmembrane segment at 8 to 28 threads the bilayer; it reads FFRALGAVILYLMTSIVVLVE. Asn31 carries N-linked (GlcNAc...) asparagine glycosylation. Residues 36-56 traverse the membrane as a helical segment; the sequence is AAGVLGLCAAGLFGYDAYITF.

Its subcellular location is the membrane. Its function is as follows. May play a role in cell differentiation in the intestinal epithelium. In Ovis aries (Sheep), this protein is Proteolipid protein 2 (PLP2).